Consider the following 625-residue polypeptide: Probable potassium transport system protein Kup (625 aa).

12 helical membrane passes run Leu-10–Leu-30, Leu-50–Val-70, Tyr-102–Ile-122, Phe-142–Ala-162, Phe-172–Ile-192, Phe-215–Tyr-235, Trp-250–Leu-270, Leu-284–Ser-304, Ile-340–Phe-360, Ala-369–Ile-389, Leu-397–Ala-417, and Leu-422–Thr-442.

This sequence belongs to the HAK/KUP transporter (TC 2.A.72) family.

Its subcellular location is the cell inner membrane. The catalysed reaction is K(+)(in) + H(+)(in) = K(+)(out) + H(+)(out). In terms of biological role, transport of potassium into the cell. Likely operates as a K(+):H(+) symporter. In Janthinobacterium sp. (strain Marseille) (Minibacterium massiliensis), this protein is Probable potassium transport system protein Kup.